Consider the following 276-residue polypeptide: Small ribosomal subunit protein uS2 (276 aa).

Disordered regions lie at residues Ala209–Val233 and Val252–Glu276. Over residues Glu211–Ala231 the composition is skewed to low complexity.

It belongs to the universal ribosomal protein uS2 family. As to quaternary structure, component of the small ribosomal subunit. Mature ribosomes consist of a small (40S) and a large (60S) subunit. The 40S subunit contains about 33 different proteins and 1 molecule of RNA (18S). The 60S subunit contains about 49 different proteins and 3 molecules of RNA (25S, 5.8S and 5S). Interacts with RPS21.

It localises to the cytoplasm. In terms of biological role, required for the assembly and/or stability of the 40S ribosomal subunit. Required for the processing of the 20S rRNA-precursor to mature 18S rRNA in a late step of the maturation of 40S ribosomal subunits. This chain is Small ribosomal subunit protein uS2, found in Mycosarcoma maydis (Corn smut fungus).